The sequence spans 413 residues: Tyrosine--tRNA ligase (413 aa).

Tyrosine 33 contributes to the L-tyrosine binding site. The 'HIGH' region signature appears at 38–47 (PTADSLHVGH). L-tyrosine is bound by residues tyrosine 162 and glutamine 166. The 'KMSKS' region signature appears at 225 to 229 (KFGKT). An ATP-binding site is contributed by lysine 228. The S4 RNA-binding domain occupies 346–413 (TSAIDAIVNV…KKKYYLLEIK (68 aa)).

This sequence belongs to the class-I aminoacyl-tRNA synthetase family. TyrS type 1 subfamily. Homodimer.

It is found in the cytoplasm. The catalysed reaction is tRNA(Tyr) + L-tyrosine + ATP = L-tyrosyl-tRNA(Tyr) + AMP + diphosphate + H(+). Functionally, catalyzes the attachment of tyrosine to tRNA(Tyr) in a two-step reaction: tyrosine is first activated by ATP to form Tyr-AMP and then transferred to the acceptor end of tRNA(Tyr). The polypeptide is Tyrosine--tRNA ligase (Mesoplasma florum (strain ATCC 33453 / NBRC 100688 / NCTC 11704 / L1) (Acholeplasma florum)).